The sequence spans 102 residues: Vesicle-associated membrane protein 5 (102 aa).

Residues 1–72 (MAGKELERCQ…RWENIRCRVY (72 aa)) are Cytoplasmic-facing. One can recognise a v-SNARE coiled-coil homology domain in the interval 5-65 (ELERCQRQAD…KTLAQQKRWE (61 aa)). Phosphoserine occurs at positions 41, 48, and 49. Residues 73–93 (LGLAVAGGLLLILVVLLVIFL) traverse the membrane as a helical; Anchor for type IV membrane protein segment. The Vesicular portion of the chain corresponds to 94–102 (PSGEDSSKP).

Belongs to the synaptobrevin family.

It localises to the cell membrane. Its subcellular location is the endomembrane system. It is found in the golgi apparatus. The protein localises to the trans-Golgi network membrane. May participate in trafficking events that are associated with myogenesis, such as myoblast fusion and/or GLUT4 trafficking. This Rattus norvegicus (Rat) protein is Vesicle-associated membrane protein 5 (Vamp5).